The following is a 291-amino-acid chain: uncharacterized protein (291 aa).

Functionally, essential for virus function. This is an uncharacterized protein from Sulfolobus spindle-shape virus 1 (SSV1).